A 236-amino-acid polypeptide reads, in one-letter code: MDKVCAVFGGSRGIGKAVAQLMAQKGYRLAIVARNLEVAKATASELGGIHLAFRCNIAKEGDVHSTFEEMEKHLGPVNFLVNAAGINRDSLLVRTKTEDMLSQLHTNLLGTMLTCRAAMRTMIQQGGSIVNVGSIIGLKGNVGQAAYSATKGGLIGFSRSLAKEVARKKIRVNVVAPGFIHTDMTKHLKEEHFKKNIPLGRFGEALEVAHAVVFLLESPYITGHVLIVDGGLQLTA.

N-acetylmethionine is present on methionine 1. NADP(+) is bound by residues 11 to 14 (SRGI) and 34 to 35 (RN). At lysine 40 the chain carries N6-acetyllysine. 83–85 (AAG) contributes to the NADP(+) binding site. Residue lysine 96 is modified to N6-acetyllysine. Substrate is bound at residue serine 134. NADP(+) contacts are provided by residues tyrosine 147, lysine 151, and 180 to 182 (IHT). Tyrosine 147 functions as the Proton acceptor in the catalytic mechanism. Residue lysine 194 is modified to N6-acetyllysine.

The protein belongs to the short-chain dehydrogenases/reductases (SDR) family. In terms of assembly, homotetramer (in vitro). Heterotetramer with HSD17B8; contains two molecules each of HSD17B8 and CBR4. Does not form homotetramers when HSD17B8 is coexpressed, only heterotetramers (in vitro).

Its subcellular location is the mitochondrion matrix. It carries out the reaction a (3R)-hydroxyacyl-[ACP] + NADP(+) = a 3-oxoacyl-[ACP] + NADPH + H(+). The enzyme catalyses a quinone + NADPH + H(+) = a quinol + NADP(+). It participates in lipid metabolism; fatty acid biosynthesis. In terms of biological role, component of the heterotetramer complex KAR (3-ketoacyl-[acyl carrier protein] reductase or 3-ketoacyl-[ACP] reductase) that forms part of the mitochondrial fatty acid synthase (mtFAS). Beta-subunit of the KAR heterotetramer complex, responsible for the 3-ketoacyl-ACP reductase activity of the mtFAS, reduces 3-oxoacyl-[ACP] to (3R)-hydroxyacyl-[ACP] in a NADPH-dependent manner with no chain length preference, thereby participating in mitochondrial fatty acid biosynthesis. The homotetramer has NADPH-dependent quinone reductase activity (in vitro), hence could play a role in protection against cytotoxicity of exogenous quinones. As a heterotetramer, it can also reduce 9,10-phenanthrenequinone, 1,4-benzoquinone and various other o-quinones and p-quinones (in vitro). The chain is 3-oxoacyl-[acyl-carrier-protein] reductase (Cbr4) from Rattus norvegicus (Rat).